Reading from the N-terminus, the 263-residue chain is Hydroxyethylthiazole kinase (263 aa).

Met-39 contributes to the substrate binding site. The ATP site is built by Lys-115 and Thr-160. Position 187 (Gly-187) interacts with substrate.

It belongs to the Thz kinase family. It depends on Mg(2+) as a cofactor.

It carries out the reaction 5-(2-hydroxyethyl)-4-methylthiazole + ATP = 4-methyl-5-(2-phosphooxyethyl)-thiazole + ADP + H(+). It participates in cofactor biosynthesis; thiamine diphosphate biosynthesis; 4-methyl-5-(2-phosphoethyl)-thiazole from 5-(2-hydroxyethyl)-4-methylthiazole: step 1/1. Its function is as follows. Catalyzes the phosphorylation of the hydroxyl group of 4-methyl-5-beta-hydroxyethylthiazole (THZ). The protein is Hydroxyethylthiazole kinase of Staphylococcus aureus (strain JH9).